The sequence spans 536 residues: MHQKILILDFGSQVTQLIARRIREAHVFCEVHPCDVTDDWVRAYARDGKLKGVILSGSHASVYEETTDKAPPAVFELGVPVLGICYGMQTMAHQLGGIVTSGHQREFGPADVRAHGHTALLEGIQDYKTAAGHGMLQVWMSHGDKVTELPHGFKLMASTDSCPIAGMADETRRFYGVQFHPEVTHTKRGAAILERFVLDICGARADWIMGDYISEAVEQIRAQVGTDEVILGLSGGVDSSVAAALIHRAIGEQLTCVFVDHGLLRLNEGDLVMEMFVGKLHAKVIRVDAADQFLGQLAGVSDPEAKRKIIGREFVEVFKAEAAKLKSDQSRHVAWLAQGTIYPDVIESGGAKNKKAVVIKSHHNVGGLPELLGLKLLEPLRELFKDEVRELGVALGLPYHMVYRHPFPGPGLGVRILGEVKKDYADLLRRADAIFIDELHNFIDEASGKSWYDLTSQAFAVFLPVKSVGVMGDGRTYDYVVALRAVQTSDFMTADWAELPYALLKKVSSRIINEVRGINRVTYDVSSKPPATIEWE.

One can recognise a Glutamine amidotransferase type-1 domain in the interval Lys-4–Asp-206. The active-site Nucleophile is Cys-85. Catalysis depends on residues His-180 and Glu-182. Residues Trp-207–Arg-404 form the GMPS ATP-PPase domain. Residue Ser-234–Ser-240 participates in ATP binding.

Homodimer.

It catalyses the reaction XMP + L-glutamine + ATP + H2O = GMP + L-glutamate + AMP + diphosphate + 2 H(+). Its pathway is purine metabolism; GMP biosynthesis; GMP from XMP (L-Gln route): step 1/1. Its function is as follows. Catalyzes the synthesis of GMP from XMP. The sequence is that of GMP synthase [glutamine-hydrolyzing] from Albidiferax ferrireducens (strain ATCC BAA-621 / DSM 15236 / T118) (Rhodoferax ferrireducens).